Here is a 361-residue protein sequence, read N- to C-terminus: Histidinol-phosphate aminotransferase (361 aa).

Position 219 is an N6-(pyridoxal phosphate)lysine (Lys219).

It belongs to the class-II pyridoxal-phosphate-dependent aminotransferase family. Histidinol-phosphate aminotransferase subfamily. In terms of assembly, homodimer. Pyridoxal 5'-phosphate is required as a cofactor.

The enzyme catalyses L-histidinol phosphate + 2-oxoglutarate = 3-(imidazol-4-yl)-2-oxopropyl phosphate + L-glutamate. The protein operates within amino-acid biosynthesis; L-histidine biosynthesis; L-histidine from 5-phospho-alpha-D-ribose 1-diphosphate: step 7/9. In Cereibacter sphaeroides (strain ATCC 17023 / DSM 158 / JCM 6121 / CCUG 31486 / LMG 2827 / NBRC 12203 / NCIMB 8253 / ATH 2.4.1.) (Rhodobacter sphaeroides), this protein is Histidinol-phosphate aminotransferase.